The chain runs to 628 residues: Patulin synthase (628 aa).

The N-terminal stretch at 1–20 is a signal peptide; that stretch reads MRPIPSILGALGAFATLSAA. The N-linked (GlcNAc...) asparagine glycan is linked to Asn-48. Residues 60-61 and 81-82 each bind FAD; these read TA and EA. A glycan (N-linked (GlcNAc...) asparagine) is linked at Asn-92. Position 147-150 (147-150) interacts with FAD; sequence NYMA. N-linked (GlcNAc...) asparagine glycosylation is found at Asn-197, Asn-260, Asn-386, Asn-429, and Asn-486. His-564 functions as the Proton acceptor in the catalytic mechanism. Residues Ala-598 and 609 to 610 contribute to the FAD site; that span reads PQ.

Belongs to the GMC oxidoreductase family. In terms of assembly, homodimer. FAD is required as a cofactor.

The protein localises to the cytoplasm. It localises to the cell cortex. The protein resides in the vacuole. It is found in the secreted. Its subcellular location is the cell wall. It catalyses the reaction (E)-ascladiol + A = patulin + AH2. It participates in mycotoxin biosynthesis; patulin biosynthesis. Functionally, patulin synthase; part of the gene cluster that mediates the biosynthesis of patulin, an acetate-derived tetraketide mycotoxin produced by several fungal species that shows antimicrobial properties against several bacteria. PatE catalyzes the last step of the pathway which is the conversion of E-ascladiol to patulin. The pathway begins with the synthesis of 6-methylsalicylic acid by the polyketide synthase (PKS) patK via condensation of acetate and malonate units. The 6-methylsalicylic acid decarboxylase patG then catalyzes the decarboxylation of 6-methylsalicylic acid to yield m-cresol (also known as 3-methylphenol). These first reactions occur in the cytosol. The intermediate m-cresol is then transported into the endoplasmic reticulum where the cytochrome P450 monooxygenase patH converts it to m-hydroxybenzyl alcohol, which is further converted to gentisyl alcohol by the cytochrome P450 monooxygenase patI. The oxidoreductases patJ and patO further convert gentisyl alcohol to isoepoxydon in the vacuole. PatN catalyzes then the transformation of isoepoxydon into phyllostine. The cluster protein patF is responsible for the conversion from phyllostine to neopatulin whereas the alcohol dehydrogenase patD converts neopatulin to E-ascladiol. The steps between isoepoxydon and E-ascladiol occur in the cytosol, and E-ascladiol is probably secreted to the extracellular space by one of the cluster-specific transporters patC or patM. Finally, the secreted patulin synthase patE catalyzes the conversion of E-ascladiol to patulin. This chain is Patulin synthase, found in Aspergillus clavatus (strain ATCC 1007 / CBS 513.65 / DSM 816 / NCTC 3887 / NRRL 1 / QM 1276 / 107).